The following is a 189-amino-acid chain: Glycerol-3-phosphate acyltransferase (189 aa).

Helical transmembrane passes span 1–21 (MVWL…AILL), 79–99 (QQAW…YFNF), 113–133 (LGLY…VFAF), and 151–171 (LLAW…GVIV).

The protein belongs to the PlsY family. In terms of assembly, probably interacts with PlsX.

It is found in the cell inner membrane. The catalysed reaction is an acyl phosphate + sn-glycerol 3-phosphate = a 1-acyl-sn-glycero-3-phosphate + phosphate. The protein operates within lipid metabolism; phospholipid metabolism. Functionally, catalyzes the transfer of an acyl group from acyl-phosphate (acyl-PO(4)) to glycerol-3-phosphate (G3P) to form lysophosphatidic acid (LPA). This enzyme utilizes acyl-phosphate as fatty acyl donor, but not acyl-CoA or acyl-ACP. The protein is Glycerol-3-phosphate acyltransferase of Azotobacter vinelandii (strain DJ / ATCC BAA-1303).